The sequence spans 228 residues: 7-cyano-7-deazaguanine synthase (228 aa).

An ATP-binding site is contributed by 8-18 (LSGGLDSTTCL). Cys188, Cys198, Cys201, and Cys204 together coordinate Zn(2+).

Belongs to the QueC family. Requires Zn(2+) as cofactor.

The enzyme catalyses 7-carboxy-7-deazaguanine + NH4(+) + ATP = 7-cyano-7-deazaguanine + ADP + phosphate + H2O + H(+). It functions in the pathway purine metabolism; 7-cyano-7-deazaguanine biosynthesis. Its function is as follows. Catalyzes the ATP-dependent conversion of 7-carboxy-7-deazaguanine (CDG) to 7-cyano-7-deazaguanine (preQ(0)). The chain is 7-cyano-7-deazaguanine synthase from Legionella pneumophila subsp. pneumophila (strain Philadelphia 1 / ATCC 33152 / DSM 7513).